Consider the following 175-residue polypeptide: Cytochrome c homolog (175 aa).

Topologically, residues 1–8 (MTGKELNK) are cytoplasmic. Residues 9–29 (IVAAILFASLIAMIVGFIANI) form a helical; Signal-anchor membrane-spanning segment. The Periplasmic portion of the chain corresponds to 30–175 (LYKPNLHVLH…LFLKNYVHDQ (146 aa)). Positions 84, 87, 88, and 150 each coordinate heme c.

The protein belongs to the cytochrome c family. Post-translationally, binds 1 heme c group covalently per subunit.

The protein localises to the cell membrane. May be involved in electron transfer from bc1 complex to aa3. The sequence is that of Cytochrome c homolog (cycM) from Rickettsia prowazekii (strain Madrid E).